Here is a 95-residue protein sequence, read N- to C-terminus: Aspartyl/glutamyl-tRNA(Asn/Gln) amidotransferase subunit C (95 aa).

It belongs to the GatC family. In terms of assembly, heterotrimer of A, B and C subunits.

The catalysed reaction is L-glutamyl-tRNA(Gln) + L-glutamine + ATP + H2O = L-glutaminyl-tRNA(Gln) + L-glutamate + ADP + phosphate + H(+). The enzyme catalyses L-aspartyl-tRNA(Asn) + L-glutamine + ATP + H2O = L-asparaginyl-tRNA(Asn) + L-glutamate + ADP + phosphate + 2 H(+). Allows the formation of correctly charged Asn-tRNA(Asn) or Gln-tRNA(Gln) through the transamidation of misacylated Asp-tRNA(Asn) or Glu-tRNA(Gln) in organisms which lack either or both of asparaginyl-tRNA or glutaminyl-tRNA synthetases. The reaction takes place in the presence of glutamine and ATP through an activated phospho-Asp-tRNA(Asn) or phospho-Glu-tRNA(Gln). This is Aspartyl/glutamyl-tRNA(Asn/Gln) amidotransferase subunit C from Citrifermentans bemidjiense (strain ATCC BAA-1014 / DSM 16622 / JCM 12645 / Bem) (Geobacter bemidjiensis).